A 407-amino-acid chain; its full sequence is POC1 centriolar protein homolog A (407 aa).

WD repeat units lie at residues 17–56, 59–98, 101–140, 143–182, 185–224, 227–266, and 269–308; these read GHRD…RAYR, GHKD…ESTV, AHTA…FLFS, QHIN…CVHS, EHGG…LLQH, LHSA…LLYT, and GHQG…VDYG. Residues 317–357 are disordered; the sequence is PATRASSSGTLPEVDPLVPPGRGRSQESMQSHSQEPVSVPQ. A compositionally biased stretch (polar residues) spans 342–357; that stretch reads QESMQSHSQEPVSVPQ. A coiled-coil region spans residues 369–397; that stretch reads QLDVLTQTVSILEQRLTLTEDKLKQCLEN.

Belongs to the WD repeat POC1 family. Interacts with POC1B.

The protein localises to the cytoplasm. It is found in the cytoskeleton. Its subcellular location is the microtubule organizing center. The protein resides in the centrosome. It localises to the centriole. The protein localises to the cilium basal body. It is found in the spindle pole. Plays an important role in centriole assembly and/or stability and ciliogenesis. Involved in early steps of centriole duplication, as well as in the later steps of centriole length control. Acts in concert with POC1B to ensure centriole integrity and proper mitotic spindle formation. The sequence is that of POC1 centriolar protein homolog A (POC1A) from Bos taurus (Bovine).